The chain runs to 79 residues: Large ribosomal subunit protein bL31c (79 aa).

This sequence belongs to the bacterial ribosomal protein bL31 family. Type A subfamily. As to quaternary structure, part of the 50S ribosomal subunit.

It localises to the plastid. It is found in the chloroplast. Functionally, binds the 23S rRNA. This is Large ribosomal subunit protein bL31c from Gracilaria tenuistipitata var. liui (Red alga).